The following is a 1059-amino-acid chain: Carbamoyl phosphate synthase large chain (1059 aa).

The interval 1–401 is carboxyphosphate synthetic domain; the sequence is MPKRQDISKI…AMLKAVRSLE (401 aa). Residues arginine 129, arginine 169, glycine 175, glycine 176, arginine 208, isoleucine 210, glutamate 215, glycine 241, isoleucine 242, histidine 243, glutamine 284, and glutamate 298 each coordinate ATP. One can recognise an ATP-grasp 1 domain in the interval 133 to 327; the sequence is KALMERLNEP…IAKMAAKIAV (195 aa). The Mg(2+) site is built by glutamine 284, glutamate 298, and asparagine 300. Mn(2+) is bound by residues glutamine 284, glutamate 298, and asparagine 300. The tract at residues 402–546 is oligomerization domain; the sequence is IGAIGLDDIT…YATYEQENES (145 aa). The carbamoyl phosphate synthetic domain stretch occupies residues 547-929; sequence IISTKKSVLV…ALYKAFIASN (383 aa). In terms of domain architecture, ATP-grasp 2 spans 671–861; it reads DQVIKELALP…LAQLATRVML (191 aa). 10 residues coordinate ATP: arginine 707, serine 746, leucine 748, glutamate 752, glycine 777, valine 778, histidine 779, serine 780, glutamine 820, and glutamate 832. Residues glutamine 820, glutamate 832, and asparagine 834 each coordinate Mg(2+). Mn(2+) is bound by residues glutamine 820, glutamate 832, and asparagine 834. The 130-residue stretch at 930 to 1059 folds into the MGS-like domain; that stretch reads IKVPRYGNVL…SRSFTVKEMH (130 aa). An allosteric domain region spans residues 930-1059; that stretch reads IKVPRYGNVL…SRSFTVKEMH (130 aa).

Belongs to the CarB family. Composed of two chains; the small (or glutamine) chain promotes the hydrolysis of glutamine to ammonia, which is used by the large (or ammonia) chain to synthesize carbamoyl phosphate. Tetramer of heterodimers (alpha,beta)4. Mg(2+) is required as a cofactor. Mn(2+) serves as cofactor.

The enzyme catalyses hydrogencarbonate + L-glutamine + 2 ATP + H2O = carbamoyl phosphate + L-glutamate + 2 ADP + phosphate + 2 H(+). It catalyses the reaction hydrogencarbonate + NH4(+) + 2 ATP = carbamoyl phosphate + 2 ADP + phosphate + 2 H(+). The protein operates within amino-acid biosynthesis; L-arginine biosynthesis; carbamoyl phosphate from bicarbonate: step 1/1. Its pathway is pyrimidine metabolism; UMP biosynthesis via de novo pathway; (S)-dihydroorotate from bicarbonate: step 1/3. Functionally, large subunit of the glutamine-dependent carbamoyl phosphate synthetase (CPSase). CPSase catalyzes the formation of carbamoyl phosphate from the ammonia moiety of glutamine, carbonate, and phosphate donated by ATP, constituting the first step of 2 biosynthetic pathways, one leading to arginine and/or urea and the other to pyrimidine nucleotides. The large subunit (synthetase) binds the substrates ammonia (free or transferred from glutamine from the small subunit), hydrogencarbonate and ATP and carries out an ATP-coupled ligase reaction, activating hydrogencarbonate by forming carboxy phosphate which reacts with ammonia to form carbamoyl phosphate. The polypeptide is Carbamoyl phosphate synthase large chain (Leuconostoc mesenteroides subsp. mesenteroides (strain ATCC 8293 / DSM 20343 / BCRC 11652 / CCM 1803 / JCM 6124 / NCDO 523 / NBRC 100496 / NCIMB 8023 / NCTC 12954 / NRRL B-1118 / 37Y)).